The following is a 412-amino-acid chain: Proteasome-activating nucleotidase (412 aa).

A coiled-coil region spans residues 18–72 (YRYLVDRVAGMESQNQELKEQIRQLESDKRYIETQKIRYEREVRKLKSEIEHLKT). Residues 197–202 (GTGKTL) and H336 each bind ATP. The tract at residues 410-412 (MFA) is docks into pockets in the proteasome alpha-ring to cause gate opening.

It belongs to the AAA ATPase family. In terms of assembly, homohexamer. The hexameric complex has a two-ring architecture resembling a top hat that caps the 20S proteasome core at one or both ends. Upon ATP-binding, the C-terminus of PAN interacts with the alpha-rings of the proteasome core by binding to the intersubunit pockets.

It is found in the cytoplasm. Functionally, ATPase which is responsible for recognizing, binding, unfolding and translocation of substrate proteins into the archaeal 20S proteasome core particle. Is essential for opening the gate of the 20S proteasome via an interaction with its C-terminus, thereby allowing substrate entry and access to the site of proteolysis. Thus, the C-termini of the proteasomal ATPase function like a 'key in a lock' to induce gate opening and therefore regulate proteolysis. Unfolding activity requires energy from ATP hydrolysis, whereas ATP binding alone promotes ATPase-20S proteasome association which triggers gate opening, and supports translocation of unfolded substrates. This Methanospirillum hungatei JF-1 (strain ATCC 27890 / DSM 864 / NBRC 100397 / JF-1) protein is Proteasome-activating nucleotidase.